A 104-amino-acid polypeptide reads, in one-letter code: Large ribosomal subunit protein bL21 (104 aa).

It belongs to the bacterial ribosomal protein bL21 family. Part of the 50S ribosomal subunit. Contacts protein L20.

Its function is as follows. This protein binds to 23S rRNA in the presence of protein L20. The protein is Large ribosomal subunit protein bL21 of Alkalilimnicola ehrlichii (strain ATCC BAA-1101 / DSM 17681 / MLHE-1).